The chain runs to 968 residues: RNA polymerase-associated protein RapA (968 aa).

The 170-residue stretch at 163–332 (EVGQRFAPRV…FARLRLLDPD (170 aa)) folds into the Helicase ATP-binding domain. Position 176-183 (176-183 (DEVGLGKT)) interacts with ATP. Residues 278-281 (DEAH) carry the DEAH box motif. A Helicase C-terminal domain is found at 491–678 (RVDWLIDFLK…NTKSRYQELK (188 aa)).

The protein belongs to the SNF2/RAD54 helicase family. RapA subfamily. Interacts with the RNAP. Has a higher affinity for the core RNAP than for the holoenzyme. Its ATPase activity is stimulated by binding to RNAP.

Transcription regulator that activates transcription by stimulating RNA polymerase (RNAP) recycling in case of stress conditions such as supercoiled DNA or high salt concentrations. Probably acts by releasing the RNAP, when it is trapped or immobilized on tightly supercoiled DNA. Does not activate transcription on linear DNA. Probably not involved in DNA repair. The protein is RNA polymerase-associated protein RapA of Shewanella piezotolerans (strain WP3 / JCM 13877).